A 510-amino-acid chain; its full sequence is 2,3-bisphosphoglycerate-independent phosphoglycerate mutase (510 aa).

Mn(2+)-binding residues include Asp-12 and Ser-62. The Phosphoserine intermediate role is filled by Ser-62. Substrate is bound by residues His-121, 151–152, Arg-183, Arg-189, 258–261, and Lys-331; these read RD and RPDR. Asp-398, His-402, Asp-439, His-440, and His-458 together coordinate Mn(2+).

The protein belongs to the BPG-independent phosphoglycerate mutase family. As to quaternary structure, monomer. It depends on Mn(2+) as a cofactor.

It catalyses the reaction (2R)-2-phosphoglycerate = (2R)-3-phosphoglycerate. The protein operates within carbohydrate degradation; glycolysis; pyruvate from D-glyceraldehyde 3-phosphate: step 3/5. Its function is as follows. Catalyzes the interconversion of 2-phosphoglycerate and 3-phosphoglycerate. This chain is 2,3-bisphosphoglycerate-independent phosphoglycerate mutase, found in Clostridioides difficile (strain 630) (Peptoclostridium difficile).